Here is a 291-residue protein sequence, read N- to C-terminus: Phosphatidylglycerol--prolipoprotein diacylglyceryl transferase (291 aa).

7 helical membrane passes run 21-41 (VSLH…MWLA), 60-80 (LLYA…VLFY), 96-116 (WDGG…MIWF), 130-150 (FIAP…FING), 198-218 (SQLY…NLFI), 225-245 (GAVS…VEFF), and 260-280 (ISMG…MMIW). Residue R143 coordinates a 1,2-diacyl-sn-glycero-3-phospho-(1'-sn-glycerol).

The protein belongs to the Lgt family.

Its subcellular location is the cell inner membrane. It carries out the reaction L-cysteinyl-[prolipoprotein] + a 1,2-diacyl-sn-glycero-3-phospho-(1'-sn-glycerol) = an S-1,2-diacyl-sn-glyceryl-L-cysteinyl-[prolipoprotein] + sn-glycerol 1-phosphate + H(+). The protein operates within protein modification; lipoprotein biosynthesis (diacylglyceryl transfer). Its function is as follows. Catalyzes the transfer of the diacylglyceryl group from phosphatidylglycerol to the sulfhydryl group of the N-terminal cysteine of a prolipoprotein, the first step in the formation of mature lipoproteins. This Cronobacter sakazakii (strain ATCC BAA-894) (Enterobacter sakazakii) protein is Phosphatidylglycerol--prolipoprotein diacylglyceryl transferase.